Reading from the N-terminus, the 329-residue chain is Tetraacyldisaccharide 4'-kinase (329 aa).

57–64 (TAGGSGKT) contacts ATP.

The protein belongs to the LpxK family.

It catalyses the reaction a lipid A disaccharide + ATP = a lipid IVA + ADP + H(+). It participates in glycolipid biosynthesis; lipid IV(A) biosynthesis; lipid IV(A) from (3R)-3-hydroxytetradecanoyl-[acyl-carrier-protein] and UDP-N-acetyl-alpha-D-glucosamine: step 6/6. Transfers the gamma-phosphate of ATP to the 4'-position of a tetraacyldisaccharide 1-phosphate intermediate (termed DS-1-P) to form tetraacyldisaccharide 1,4'-bis-phosphate (lipid IVA). This chain is Tetraacyldisaccharide 4'-kinase, found in Thiobacillus denitrificans (strain ATCC 25259 / T1).